The chain runs to 654 residues: Acetyl-coenzyme A synthetase (654 aa).

CoA is bound by residues 191 to 194 (RRGQ) and Thr-315. ATP is bound by residues 391-393 (GEP), 415-420 (DTWWQT), Asp-506, and Arg-521. Ser-529 contributes to the CoA binding site. Arg-532 is a binding site for ATP. 3 residues coordinate Mg(2+): Val-543, His-545, and Val-548. Lys-615 is modified (N6-acetyllysine).

The protein belongs to the ATP-dependent AMP-binding enzyme family. Mg(2+) serves as cofactor. Acetylated. Deacetylation by the SIR2-homolog deacetylase activates the enzyme.

It carries out the reaction acetate + ATP + CoA = acetyl-CoA + AMP + diphosphate. Catalyzes the conversion of acetate into acetyl-CoA (AcCoA), an essential intermediate at the junction of anabolic and catabolic pathways. AcsA undergoes a two-step reaction. In the first half reaction, AcsA combines acetate with ATP to form acetyl-adenylate (AcAMP) intermediate. In the second half reaction, it can then transfer the acetyl group from AcAMP to the sulfhydryl group of CoA, forming the product AcCoA. The chain is Acetyl-coenzyme A synthetase from Gemmatimonas aurantiaca (strain DSM 14586 / JCM 11422 / NBRC 100505 / T-27).